The sequence spans 251 residues: Glucosamine-6-phosphate deaminase (251 aa).

Aspartate 67 acts as the Proton acceptor; for enolization step in catalysis. The active-site For ring-opening step is the asparagine 136. Histidine 138 (proton acceptor; for ring-opening step) is an active-site residue. The active-site For ring-opening step is glutamate 143.

It belongs to the glucosamine/galactosamine-6-phosphate isomerase family. NagB subfamily.

The enzyme catalyses alpha-D-glucosamine 6-phosphate + H2O = beta-D-fructose 6-phosphate + NH4(+). Its pathway is amino-sugar metabolism; N-acetylneuraminate degradation; D-fructose 6-phosphate from N-acetylneuraminate: step 5/5. In terms of biological role, catalyzes the reversible isomerization-deamination of glucosamine 6-phosphate (GlcN6P) to form fructose 6-phosphate (Fru6P) and ammonium ion. The protein is Glucosamine-6-phosphate deaminase of Geobacillus sp. (strain WCH70).